Reading from the N-terminus, the 342-residue chain is MNKETLILAIETSCDETSVSVIKNGNSILSNIVLSQIESHKRFGGVVPEVASRHHVEGITTTIEEALTTANISMNDIDAIAVTQGPGLIGALLIGINAAKALAFAYDKPLIPVHHIAGHIYANHLEEPLTFPLITLIVSGGHTELVYMKSHMHFEVIGETRDDAVGEAYDKVARTIDLPYPGGPQIDKLAQYGKDTYDFPRVWLEKESYDFSFSGLKSSVINKLHNLRQKNEEVVKEDVATSFQNSVVDVLSTKAINACKAYKVNRLIVAGGVASNKGLRYRLQQLCEDNNIHLSIPSPKLCTDNAAMIGAAAYYYYQSGITAKLDLNGENNMDIEEATIEV.

Fe cation contacts are provided by His-115 and His-119. Residues 137–141 (IVSGG), Asp-170, Gly-183, Asp-187, and Asn-276 contribute to the substrate site. Asp-304 serves as a coordination point for Fe cation.

The protein belongs to the KAE1 / TsaD family. It depends on Fe(2+) as a cofactor.

Its subcellular location is the cytoplasm. The catalysed reaction is L-threonylcarbamoyladenylate + adenosine(37) in tRNA = N(6)-L-threonylcarbamoyladenosine(37) in tRNA + AMP + H(+). Required for the formation of a threonylcarbamoyl group on adenosine at position 37 (t(6)A37) in tRNAs that read codons beginning with adenine. Is involved in the transfer of the threonylcarbamoyl moiety of threonylcarbamoyl-AMP (TC-AMP) to the N6 group of A37, together with TsaE and TsaB. TsaD likely plays a direct catalytic role in this reaction. In Staphylococcus haemolyticus (strain JCSC1435), this protein is tRNA N6-adenosine threonylcarbamoyltransferase.